A 194-amino-acid polypeptide reads, in one-letter code: ATP-dependent Clp protease proteolytic subunit (194 aa).

The active-site Nucleophile is the Ser-98. The active site involves His-123.

This sequence belongs to the peptidase S14 family. As to quaternary structure, fourteen ClpP subunits assemble into 2 heptameric rings which stack back to back to give a disk-like structure with a central cavity, resembling the structure of eukaryotic proteasomes.

It is found in the cytoplasm. The enzyme catalyses Hydrolysis of proteins to small peptides in the presence of ATP and magnesium. alpha-casein is the usual test substrate. In the absence of ATP, only oligopeptides shorter than five residues are hydrolyzed (such as succinyl-Leu-Tyr-|-NHMec, and Leu-Tyr-Leu-|-Tyr-Trp, in which cleavage of the -Tyr-|-Leu- and -Tyr-|-Trp bonds also occurs).. Cleaves peptides in various proteins in a process that requires ATP hydrolysis. Has a chymotrypsin-like activity. Plays a major role in the degradation of misfolded proteins. This Clostridium tetani (strain Massachusetts / E88) protein is ATP-dependent Clp protease proteolytic subunit.